The chain runs to 339 residues: Oncoprotein MEQ (339 aa).

A disordered region spans residues 1-80; sequence MSQEPEPGAM…ARRRRRKQTD (80 aa). Position 42 is a phosphoserine; by host CDK2 (Ser-42). Residues 57 to 84 form a basic motif region; the sequence is KQKLERRRKRNRDAARRRRRKQTDYVDK. Residues 57–120 enclose the bZIP domain; the sequence is KQKLERRRKR…TSLRVQLACH (64 aa). Positions 60–77 are enriched in basic residues; the sequence is LERRRKRNRDAARRRRRK. Residues 62–78 carry the Nuclear localization signal motif; sequence RRRKRNRDAARRRRRKQ. Residues 85–113 form a leucine-zipper region; sequence LHEACEELQRANEHLRKEIRDLRTECTSL. The transactivation domain stretch occupies residues 120-339; sequence HEPVCPMAVP…VWWFPGDGRP (220 aa). A compositionally biased stretch (pro residues) spans 145–160; that stretch reads PEPPICTPPPPSPDEP. Positions 145–172 are disordered; that stretch reads PEPPICTPPPPSPDEPNAPHCSGSQPPI.

This sequence belongs to the bZIP family. Jun subfamily. As to quaternary structure, homodimer. Interacts with host JUN; this interaction allows MEQ to engage in host cell processes by disguising itself as a cellular JUN. In terms of processing, phosphorylated by host CDK2; this phosphorylation greatly reduces the DNA binding activity of MEQ.

It localises to the host nucleus. It is found in the host nucleolus. In terms of biological role, functions as a DNA-binding transcription factor. Promotes transformation, host cell growth, host cell-cycle progression through G1/S phase, and possesses antiapoptotic activity. Forms functional heterodimers with host JUN. These heterodimers bind with high affinity DNA sequences called MEQ-responsive elements MERE I (TGACA/GTCA), while MEQ homodimers bind a second type of sites termed MERE II (ACACA). Both homo and heterodimerization of MEQ are required for oncogenesis. In Gallid herpesvirus 2 (strain Chicken/Md5/ATCC VR-987) (GaHV-2), this protein is Oncoprotein MEQ (MDV005).